We begin with the raw amino-acid sequence, 404 residues long: Phosphoribulokinase, chloroplastic (404 aa).

The transit peptide at 1 to 53 (MAFCSPHTTTSLRSPCTTIPNSGFRQNQVIFFTTRSSRRSNTRHGARTFQVSC) directs the protein to the chloroplast. Cysteine 69 and cysteine 108 are oxidised to a cystine.

The protein belongs to the phosphoribulokinase family.

It localises to the plastid. The protein localises to the chloroplast. It catalyses the reaction D-ribulose 5-phosphate + ATP = D-ribulose 1,5-bisphosphate + ADP + H(+). Its pathway is carbohydrate biosynthesis; Calvin cycle. Its activity is regulated as follows. Light regulated via thioredoxin by reversible oxidation/reduction of sulfhydryl/disulfide groups. The chain is Phosphoribulokinase, chloroplastic from Triticum aestivum (Wheat).